A 502-amino-acid polypeptide reads, in one-letter code: ATP synthase subunit alpha (502 aa).

The disordered stretch occupies residues 115 to 135 (VDGLGPINTTNTRPIESPAPG). Residue 169 to 176 (GDRQTGKT) coordinates ATP.

Belongs to the ATPase alpha/beta chains family. In terms of assembly, F-type ATPases have 2 components, CF(1) - the catalytic core - and CF(0) - the membrane proton channel. CF(1) has five subunits: alpha(3), beta(3), gamma(1), delta(1), epsilon(1). CF(0) has three main subunits: a(1), b(2) and c(9-12). The alpha and beta chains form an alternating ring which encloses part of the gamma chain. CF(1) is attached to CF(0) by a central stalk formed by the gamma and epsilon chains, while a peripheral stalk is formed by the delta and b chains.

The protein localises to the cell membrane. The catalysed reaction is ATP + H2O + 4 H(+)(in) = ADP + phosphate + 5 H(+)(out). Produces ATP from ADP in the presence of a proton gradient across the membrane. The alpha chain is a regulatory subunit. In Bacillus anthracis (strain A0248), this protein is ATP synthase subunit alpha.